Reading from the N-terminus, the 989-residue chain is Clumping factor A (989 aa).

A signal peptide spans 1-39 (MNMKKKEKHAIRKKSIGVASVLVGTLIGFGLLSSKEADA). A YSIRK-G/S signaling motif motif is present at residues 9–20 (HAIRKKSIGVAS). Disordered regions lie at residues 34 to 205 (SKEA…VSQA) and 529 to 960 (FNNG…SEDE). The tract at residues 40–542 (SENSVTQSDS…SGSGDGIDKP (503 aa)) is ligand binding A region. A compositionally biased stretch (low complexity) spans 47 to 65 (SDSASNESKSNDSSSVSAA). Positions 71-105 (TNVSDTKTSSNTNNGETSVAQNPAQQETTQSSSTN) are enriched in polar residues. 2 stretches are compositionally biased toward low complexity: residues 106 to 132 (ATTE…ATTQ) and 143 to 162 (NQTS…SVNS). Over residues 163 to 205 (PQNSTNAENVSTTQDTSTEATPSNNESAPQNTDASNKDVVSQA) the composition is skewed to polar residues. Residues 547–565 (QPDEPGEIEPIPEDSDSDP) show a composition bias toward acidic residues. Positions 566–598 (GSDSGSDSNSDSGSDSGSDSTSDSGSDSASDSD) are enriched in low complexity. Positions 599–917 (SASDSDSASD…DNDSDSDSNS (319 aa)) are enriched in acidic residues. Residues 918–936 (DSESGSNNNVVPPNSPKNG) are compositionally biased toward low complexity. Positions 943-952 (NEAKDSKEPL) are enriched in basic and acidic residues. An LPXTG sorting signal motif is present at residues 952 to 956 (LPDTG). Threonine 955 is subject to Pentaglycyl murein peptidoglycan amidated threonine. Positions 956–989 (GSEDEANTSLIWGLLASLGSLLLFRRKKENKDKK) are cleaved as a propeptide — removed by sortase.

The protein belongs to the serine-aspartate repeat-containing protein (SDr) family.

It localises to the secreted. It is found in the cell wall. Functionally, cell surface-associated protein implicated in virulence. Promotes bacterial attachment exclusively to the gamma-chain of human fibrinogen. Induces formation of bacterial clumps, which diminish the ability of group IIA phospholipase A2 to cause bacterial phospholipid hydrolysis and killing. Significantly decreases macrophage phagocytosis possibly thanks to the clumps, clumped bacteria being too large to be phagocytosed. Dominant factor responsible for human platelet aggregation, which may be an important mechanism for initiating infective endocarditis. This is Clumping factor A (clfA) from Staphylococcus aureus (strain N315).